Reading from the N-terminus, the 67-residue chain is Large ribosomal subunit protein bL35 (67 aa).

It belongs to the bacterial ribosomal protein bL35 family.

In Methylorubrum extorquens (strain CM4 / NCIMB 13688) (Methylobacterium extorquens), this protein is Large ribosomal subunit protein bL35.